Here is a 489-residue protein sequence, read N- to C-terminus: MKLEAENDLMAVRLEKLHQLQEAGIEPYGGPFEVTHSTTAIRERFDELEGQEVALAGRLLAIRSHGKASFADLQDREGRLQLYIRLDNVGPGIYELFQKLDIGDIVGVRGKVFRTHRGEISVEVRQLTLLCKSLRPLPEKWHGLKDVDLRYRQRYLDLIVNPEVKQVFITRARIIRAIRSFLDNRGFLEVETPTMHPIAGGAAARPFITHHNALDIDLYLRIALELHLKRLLVGGLEKVYEMGRIFRNEGISTKHNPEFTMLELYQAYADYYVMMDLLEEMVAYVAREALGTTVVTYQGDRLDLTPPWPRLTMLEAIKKYYGVDFDQLPTAEDARRAAISLGLEIEPGMERGKIINEVFEATVEPHLIQPTFILDYPVAISPLAKRKKENPDFTYRFEAFIAGRELANAFSELNDPIDQRRRFEAQMAERAAGDEEAHMMDEDFLQALEYGMPPAGGMGIGIDRLVMVLTDSPSIRDVILFPTMRPKEE.

Mg(2+) is bound by residues E398 and E405.

It belongs to the class-II aminoacyl-tRNA synthetase family. Homodimer. Requires Mg(2+) as cofactor.

The protein localises to the cytoplasm. It catalyses the reaction tRNA(Lys) + L-lysine + ATP = L-lysyl-tRNA(Lys) + AMP + diphosphate. The protein is Lysine--tRNA ligase of Moorella thermoacetica (strain ATCC 39073 / JCM 9320).